Here is a 338-residue protein sequence, read N- to C-terminus: Lipoate-protein ligase A (338 aa).

A BPL/LPL catalytic domain is found at 29 to 216; the sequence is PATQRVLFLW…AFFVHYGERV (188 aa). ATP contacts are provided by residues Arg71, 76–79, and Lys134; that span reads GAVF. Lys134 is a binding site for (R)-lipoate.

Belongs to the LplA family. In terms of assembly, monomer.

The protein localises to the cytoplasm. The catalysed reaction is L-lysyl-[lipoyl-carrier protein] + (R)-lipoate + ATP = N(6)-[(R)-lipoyl]-L-lysyl-[lipoyl-carrier protein] + AMP + diphosphate + H(+). The protein operates within protein modification; protein lipoylation via exogenous pathway; protein N(6)-(lipoyl)lysine from lipoate: step 1/2. It functions in the pathway protein modification; protein lipoylation via exogenous pathway; protein N(6)-(lipoyl)lysine from lipoate: step 2/2. In terms of biological role, catalyzes both the ATP-dependent activation of exogenously supplied lipoate to lipoyl-AMP and the transfer of the activated lipoyl onto the lipoyl domains of lipoate-dependent enzymes. The sequence is that of Lipoate-protein ligase A from Salmonella newport (strain SL254).